We begin with the raw amino-acid sequence, 45 residues long: Large ribosomal subunit protein bL36 (45 aa).

The segment at 1–20 (MKVSSSIKADPSKGDKLVRR) is disordered.

The protein belongs to the bacterial ribosomal protein bL36 family.

This Chlamydia abortus (strain DSM 27085 / S26/3) (Chlamydophila abortus) protein is Large ribosomal subunit protein bL36.